A 106-amino-acid chain; its full sequence is NADH-quinone oxidoreductase subunit K (106 aa).

Helical transmembrane passes span 10–30 (IHYY…GVMV), 35–55 (VLIF…FVTF), and 67–87 (VVFF…AIVI).

The protein belongs to the complex I subunit 4L family. NDH-1 is composed of 14 different subunits. Subunits NuoA, H, J, K, L, M, N constitute the membrane sector of the complex.

It localises to the cell inner membrane. It carries out the reaction a quinone + NADH + 5 H(+)(in) = a quinol + NAD(+) + 4 H(+)(out). In terms of biological role, NDH-1 shuttles electrons from NADH, via FMN and iron-sulfur (Fe-S) centers, to quinones in the respiratory chain. The immediate electron acceptor for the enzyme in this species is believed to be ubiquinone. Couples the redox reaction to proton translocation (for every two electrons transferred, four hydrogen ions are translocated across the cytoplasmic membrane), and thus conserves the redox energy in a proton gradient. This chain is NADH-quinone oxidoreductase subunit K, found in Leptospira interrogans serogroup Icterohaemorrhagiae serovar copenhageni (strain Fiocruz L1-130).